The following is a 699-amino-acid chain: tRNA(Met) cytidine acetyltransferase TmcA (699 aa).

ATP-binding positions include glutamine 179, 201–210 (GRGKSTLAGM), and arginine 323. The N-acetyltransferase domain maps to 359 to 543 (IEIPLYEQRD…SGCYTAMALL (185 aa)). Residues 471-473 (VAV), glutamate 511, and arginine 518 contribute to the acetyl-CoA site.

It belongs to the RNA cytidine acetyltransferase family. TmcA subfamily.

The protein localises to the cytoplasm. It carries out the reaction cytidine(34) in elongator tRNA(Met) + acetyl-CoA + ATP + H2O = N(4)-acetylcytidine(34) in elongator tRNA(Met) + ADP + phosphate + CoA + H(+). In terms of biological role, catalyzes the formation of N(4)-acetylcytidine (ac(4)C) at the wobble position of tRNA(Met), by using acetyl-CoA as an acetyl donor and ATP (or GTP). This is tRNA(Met) cytidine acetyltransferase TmcA from Yersinia pestis (strain D106004).